The following is a 227-amino-acid chain: 2,3-bisphosphoglycerate-dependent phosphoglycerate mutase (227 aa).

Substrate-binding positions include 7-14 (RHGFSEWN), 20-21 (TG), arginine 59, 86-89 (ERHY), lysine 97, 113-114 (RR), and 182-183 (GN). Residue histidine 8 is the Tele-phosphohistidine intermediate of the active site. Catalysis depends on glutamate 86, which acts as the Proton donor/acceptor.

It belongs to the phosphoglycerate mutase family. BPG-dependent PGAM subfamily. Homodimer.

The catalysed reaction is (2R)-2-phosphoglycerate = (2R)-3-phosphoglycerate. It functions in the pathway carbohydrate degradation; glycolysis; pyruvate from D-glyceraldehyde 3-phosphate: step 3/5. In terms of biological role, catalyzes the interconversion of 2-phosphoglycerate and 3-phosphoglycerate. This chain is 2,3-bisphosphoglycerate-dependent phosphoglycerate mutase, found in Histophilus somni (strain 129Pt) (Haemophilus somnus).